The following is a 251-amino-acid chain: L,D-transpeptidase 1 (251 aa).

Positions methionine 1 to alanine 28 are cleaved as a signal peptide. The region spanning leucine 125 to valine 250 is the L,D-TPase catalytic domain. Substrate-binding positions include tyrosine 190 and serine 203 to glycine 204. The active-site Proton donor/acceptor is histidine 208. The active-site Nucleophile is cysteine 226. Asparagine 228 is a substrate binding site.

In terms of assembly, monomer.

The protein resides in the periplasm. The protein operates within cell wall biogenesis; peptidoglycan biosynthesis. Is irreversibly inactivated by the beta-lactams carbapenems via the formation of a covalent adduct resulting from acylation of the catalytic Cys. Generates 3-&gt;3 cross-links in peptidoglycan, catalyzing the cleavage of the mDap(3)-D-Ala(4) bond of a tetrapeptide donor stem and the formation of a bond between the carbonyl of mDap(3) of the donor stem and the side chain of mDap(3) of the acceptor stem. Is specific for donor substrates containing a stem tetrapeptide since it cannot use pentapeptide stems. In Mycobacterium tuberculosis (strain CDC 1551 / Oshkosh), this protein is L,D-transpeptidase 1 (ldtA).